Reading from the N-terminus, the 368-residue chain is Peptide chain release factor 2 (368 aa).

Gln-249 carries the post-translational modification N5-methylglutamine.

This sequence belongs to the prokaryotic/mitochondrial release factor family. Methylated by PrmC. Methylation increases the termination efficiency of RF2.

The protein resides in the cytoplasm. Functionally, peptide chain release factor 2 directs the termination of translation in response to the peptide chain termination codons UGA and UAA. The chain is Peptide chain release factor 2 from Rhodococcus jostii (strain RHA1).